The chain runs to 486 residues: Glutamyl-tRNA(Gln) amidotransferase subunit A (486 aa).

Active-site charge relay system residues include Lys-79 and Ser-154. Ser-178 serves as the catalytic Acyl-ester intermediate.

Belongs to the amidase family. GatA subfamily. In terms of assembly, heterotrimer of A, B and C subunits.

It catalyses the reaction L-glutamyl-tRNA(Gln) + L-glutamine + ATP + H2O = L-glutaminyl-tRNA(Gln) + L-glutamate + ADP + phosphate + H(+). Functionally, allows the formation of correctly charged Gln-tRNA(Gln) through the transamidation of misacylated Glu-tRNA(Gln) in organisms which lack glutaminyl-tRNA synthetase. The reaction takes place in the presence of glutamine and ATP through an activated gamma-phospho-Glu-tRNA(Gln). This chain is Glutamyl-tRNA(Gln) amidotransferase subunit A, found in Myxococcus xanthus (strain DK1622).